Consider the following 322-residue polypeptide: Uracil-DNA glycosylase (322 aa).

D142 (proton acceptor) is an active-site residue.

The protein belongs to the uracil-DNA glycosylase (UDG) superfamily. UNG family.

It localises to the mitochondrion. The protein resides in the nucleus. The catalysed reaction is Hydrolyzes single-stranded DNA or mismatched double-stranded DNA and polynucleotides, releasing free uracil.. Its function is as follows. Excises uracil residues from the DNA which can arise as a result of misincorporation of dUMP residues by DNA polymerase or due to deamination of cytosine. The polypeptide is Uracil-DNA glycosylase (ung1) (Schizosaccharomyces pombe (strain 972 / ATCC 24843) (Fission yeast)).